Consider the following 732-residue polypeptide: DNA-directed RNA polymerase subunit beta' (732 aa).

Zn(2+) contacts are provided by Cys-70, Cys-72, Cys-85, and Cys-88. 3 residues coordinate Mg(2+): Asp-575, Asp-577, and Asp-579.

The protein belongs to the RNA polymerase beta' chain family. RpoC1 subfamily. In plastids the minimal PEP RNA polymerase catalytic core is composed of four subunits: alpha, beta, beta', and beta''. When a (nuclear-encoded) sigma factor is associated with the core the holoenzyme is formed, which can initiate transcription. Mg(2+) is required as a cofactor. It depends on Zn(2+) as a cofactor.

The protein resides in the plastid. It is found in the chloroplast. It catalyses the reaction RNA(n) + a ribonucleoside 5'-triphosphate = RNA(n+1) + diphosphate. Its function is as follows. DNA-dependent RNA polymerase catalyzes the transcription of DNA into RNA using the four ribonucleoside triphosphates as substrates. This chain is DNA-directed RNA polymerase subunit beta', found in Thalassiosira pseudonana (Marine diatom).